The primary structure comprises 527 residues: MTTQAAEVAKRRTFAIISHPDAGKTTITEKLLLMGKAIAVAGTVKSRKSDRHATSDWMEMEKQRGISITTSVMQFPYREHMINLLDTPGHEDFSEDTYRTLTAVDSALMVLDGGKGVEPRTIALMEVCRLRDTPIVSFINKLDRDIRDPIELLDEIEAVLKIKAAPITWPIGCYKDFKGVYHLADDKIIVYVPGHGHERIETKIIDKLDSDEARAHLGDLYDNFVEQLELVQGACHTFDKDAFLKGEMTPVFFGTALGNFGVDQVLDCIVDWAPQPLSRATHERNVEPTEEKFSGFVFKIQANMDPKHRDRIAFMRICSGKYEKGMKMRHVRLGKDVKIADALTFFSSEREQLEEAYAGDIIGLHNHGTIQIGDTFSEGENFGFTGIPHFAPELFRRVRLKDPLKSKQLRQGLQELAEEGATQVFFPERNNDIILGAVGVLQFDVVASRLKEEYKVECAYEAINVWSARWIECDDEKKLKEFQDKAFENLSVDGGGHLTYLAPTRVNLSLMEERWPDIRFRATREHH.

Residues 9–277 (AKRRTFAIIS…CIVDWAPQPL (269 aa)) enclose the tr-type G domain. Residues 18 to 25 (SHPDAGKT), 86 to 90 (DTPGH), and 140 to 143 (NKLD) each bind GTP.

It belongs to the TRAFAC class translation factor GTPase superfamily. Classic translation factor GTPase family. PrfC subfamily.

It localises to the cytoplasm. Increases the formation of ribosomal termination complexes and stimulates activities of RF-1 and RF-2. It binds guanine nucleotides and has strong preference for UGA stop codons. It may interact directly with the ribosome. The stimulation of RF-1 and RF-2 is significantly reduced by GTP and GDP, but not by GMP. The protein is Peptide chain release factor 3 of Pseudomonas paraeruginosa (strain DSM 24068 / PA7) (Pseudomonas aeruginosa (strain PA7)).